A 464-amino-acid polypeptide reads, in one-letter code: UDP-N-acetylmuramoyl-tripeptide--D-alanyl-D-alanine ligase (464 aa).

125–131 (GSNGKTT) is an ATP binding site.

Belongs to the MurCDEF family. MurF subfamily.

Its subcellular location is the cytoplasm. The enzyme catalyses D-alanyl-D-alanine + UDP-N-acetyl-alpha-D-muramoyl-L-alanyl-gamma-D-glutamyl-meso-2,6-diaminopimelate + ATP = UDP-N-acetyl-alpha-D-muramoyl-L-alanyl-gamma-D-glutamyl-meso-2,6-diaminopimeloyl-D-alanyl-D-alanine + ADP + phosphate + H(+). It functions in the pathway cell wall biogenesis; peptidoglycan biosynthesis. Functionally, involved in cell wall formation. Catalyzes the final step in the synthesis of UDP-N-acetylmuramoyl-pentapeptide, the precursor of murein. The sequence is that of UDP-N-acetylmuramoyl-tripeptide--D-alanyl-D-alanine ligase from Borreliella burgdorferi (strain ATCC 35210 / DSM 4680 / CIP 102532 / B31) (Borrelia burgdorferi).